We begin with the raw amino-acid sequence, 213 residues long: MKSLQALFGGTFDPVHYGHLKPVETLANLIGLSRVIIMPNNVPPHRPQPEASSAQRKYMLELAIADKPLFTLGERELQRNAPSYTAQTLKAWREEQGPEAPLAFIIGQDSLLNFPTWHDYDTILDNTHLIVCRRPGYPLEMTQAQHQQWLEQHLTHTPDDLHQLPAGKIYLAETPWLNISATLIRERLEKGESCDDLLPENVLNYINQQGLYR.

The protein belongs to the NadD family.

The catalysed reaction is nicotinate beta-D-ribonucleotide + ATP + H(+) = deamido-NAD(+) + diphosphate. It functions in the pathway cofactor biosynthesis; NAD(+) biosynthesis; deamido-NAD(+) from nicotinate D-ribonucleotide: step 1/1. Functionally, catalyzes the reversible adenylation of nicotinate mononucleotide (NaMN) to nicotinic acid adenine dinucleotide (NaAD). This chain is Nicotinate-nucleotide adenylyltransferase, found in Salmonella typhi.